Here is a 257-residue protein sequence, read N- to C-terminus: Snake venom serine proteinase 11 (257 aa).

Positions 1-18 (MVLIRVLANLLILQLSYA) are cleaved as a signal peptide. Positions 19 to 24 (QKSSEL) are excised as a propeptide. The region spanning 25-248 (VVGGDECNIN…YTEWIQSIIT (224 aa)) is the Peptidase S1 domain. 6 cysteine pairs are disulfide-bonded: Cys31–Cys162, Cys49–Cys65, Cys97–Cys255, Cys141–Cys209, Cys173–Cys188, and Cys199–Cys224. Catalysis depends on charge relay system residues His64 and Asp109. Asn120 carries N-linked (GlcNAc...) asparagine glycosylation. Ser203 serves as the catalytic Charge relay system.

Belongs to the peptidase S1 family. Snake venom subfamily. As to quaternary structure, monomer. Expressed by the venom gland.

It is found in the secreted. Snake venom serine protease that may act in the hemostasis system of the prey. This Crotalus adamanteus (Eastern diamondback rattlesnake) protein is Snake venom serine proteinase 11.